We begin with the raw amino-acid sequence, 552 residues long: 5'-AMP-activated protein kinase catalytic subunit alpha-2 (552 aa).

The region spanning 16-268 (YVLGDTLGVG…IKDIREHEWF (253 aa)) is the Protein kinase domain. Residues 22 to 30 (LGVGTFGKV) and K45 each bind ATP. The active-site Proton acceptor is the D139. T172 carries the phosphothreonine; by LKB1 and CaMKK2 modification. T258 is subject to Phosphothreonine. The interval 291–376 (EAVKEVCEKF…PERMPPLIAD (86 aa)) is AIS. At S377 the chain carries Phosphoserine. The disordered stretch occupies residues 478 to 519 (EQRSGSSTPQRSCSAAGLHRPRSSLDSVTAESHSLSGSLSGS). A compositionally biased stretch (polar residues) spans 480–490 (RSGSSTPQRSC). A Phosphoserine modification is found at S491. Over residues 509-519 (SHSLSGSLSGS) the composition is skewed to low complexity.

The protein belongs to the protein kinase superfamily. CAMK Ser/Thr protein kinase family. SNF1 subfamily. AMPK is a heterotrimer of an alpha catalytic subunit (PRKAA1 or PRKAA2), a beta (PRKAB1 or PRKAB2) and a gamma non-catalytic subunits (PRKAG1, PRKAG2 or PRKAG3). Interacts with FNIP1 and FNIP2. Interacts with DUSP29. Interacts with ARF6. The phosphorylated form at Thr-172 mediated by CamKK2 interacts with ACSS2. Requires Mg(2+) as cofactor. In terms of processing, ubiquitinated. Post-translationally, phosphorylated at Thr-172 by STK11/LKB1 in complex with STE20-related adapter-alpha (STRADA) pseudo kinase and CAB39. Also phosphorylated at Thr-172 by CAMKK2; triggered by a rise in intracellular calcium ions, without detectable changes in the AMP/ATP ratio. CAMKK1 can also phosphorylate Thr-172, but at much lower level. Dephosphorylated by protein phosphatase 2A and 2C (PP2A and PP2C). Phosphorylated by ULK1; leading to negatively regulate AMPK activity and suggesting the existence of a regulatory feedback loop between ULK1 and AMPK. Dephosphorylated by PPM1A and PPM1B at Thr-172 (mediated by STK11/LKB1).

It localises to the cytoplasm. The protein localises to the nucleus. The catalysed reaction is L-seryl-[protein] + ATP = O-phospho-L-seryl-[protein] + ADP + H(+). It carries out the reaction L-threonyl-[protein] + ATP = O-phospho-L-threonyl-[protein] + ADP + H(+). It catalyses the reaction L-seryl-[acetyl-CoA carboxylase] + ATP = O-phospho-L-seryl-[acetyl-CoA carboxylase] + ADP + H(+). The enzyme catalyses L-seryl-[3-hydroxy-3-methylglutaryl-coenzyme A reductase] + ATP = O-phospho-L-seryl-[3-hydroxy-3-methylglutaryl-coenzyme A reductase] + ADP + H(+). Activated by phosphorylation on Thr-172. Binding of AMP to non-catalytic gamma subunit (PRKAG1, PRKAG2 or PRKAG3) results in allosteric activation, inducing phosphorylation on Thr-172. AMP-binding to gamma subunit also sustains activity by preventing dephosphorylation of Thr-172. ADP also stimulates Thr-172 phosphorylation, without stimulating already phosphorylated AMPK. ATP promotes dephosphorylation of Thr-172, rendering the enzyme inactive. Under physiological conditions AMPK mainly exists in its inactive form in complex with ATP, which is much more abundant than AMP. Selectively inhibited by compound C (6-[4-(2-Piperidin-1-yl-ethoxy)-phenyl)]-3-pyridin-4-yl-pyyrazolo[1,5-a] pyrimidine. Activated by resveratrol, a natural polyphenol present in red wine, and S17834, a synthetic polyphenol. Salicylate/aspirin directly activates kinase activity, primarily by inhibiting Thr-172 dephosphorylation. Catalytic subunit of AMP-activated protein kinase (AMPK), an energy sensor protein kinase that plays a key role in regulating cellular energy metabolism. In response to reduction of intracellular ATP levels, AMPK activates energy-producing pathways and inhibits energy-consuming processes: inhibits protein, carbohydrate and lipid biosynthesis, as well as cell growth and proliferation. AMPK acts via direct phosphorylation of metabolic enzymes, and by longer-term effects via phosphorylation of transcription regulators. Regulates lipid synthesis by phosphorylating and inactivating lipid metabolic enzymes such as ACACA, ACACB, GYS1, HMGCR and LIPE; regulates fatty acid and cholesterol synthesis by phosphorylating acetyl-CoA carboxylase (ACACA and ACACB) and hormone-sensitive lipase (LIPE) enzymes, respectively. Promotes lipolysis of lipid droplets by mediating phosphorylation of isoform 1 of CHKA (CHKalpha2). Regulates insulin-signaling and glycolysis by phosphorylating IRS1, PFKFB2 and PFKFB3. Involved in insulin receptor/INSR internalization. AMPK stimulates glucose uptake in muscle by increasing the translocation of the glucose transporter SLC2A4/GLUT4 to the plasma membrane, possibly by mediating phosphorylation of TBC1D4/AS160. Regulates transcription and chromatin structure by phosphorylating transcription regulators involved in energy metabolism such as CRTC2/TORC2, FOXO3, histone H2B, HDAC5, MEF2C, MLXIPL/ChREBP, EP300, HNF4A, p53/TP53, SREBF1, SREBF2 and PPARGC1A. Acts as a key regulator of glucose homeostasis in liver by phosphorylating CRTC2/TORC2, leading to CRTC2/TORC2 sequestration in the cytoplasm. In response to stress, phosphorylates 'Ser-36' of histone H2B (H2BS36ph), leading to promote transcription. Acts as a key regulator of cell growth and proliferation by phosphorylating FNIP1, TSC2, RPTOR, WDR24 and ATG1/ULK1: in response to nutrient limitation, negatively regulates the mTORC1 complex by phosphorylating RPTOR component of the mTORC1 complex and by phosphorylating and activating TSC2. Also phosphorylates and inhibits GATOR2 subunit WDR24 in response to nutrient limitation, leading to suppress glucose-mediated mTORC1 activation. In response to energetic stress, phosphorylates FNIP1, inactivating the non-canonical mTORC1 signaling, thereby promoting nuclear translocation of TFEB and TFE3, and inducing transcription of lysosomal or autophagy genes. In response to nutrient limitation, promotes autophagy by phosphorylating and activating ATG1/ULK1. In that process also activates WDR45/WIPI4. Phosphorylates CASP6, thereby preventing its autoprocessing and subsequent activation. AMPK also acts as a regulator of circadian rhythm by mediating phosphorylation of CRY1, leading to destabilize it. May regulate the Wnt signaling pathway by phosphorylating CTNNB1, leading to stabilize it. Also acts as a regulator of cellular polarity by remodeling the actin cytoskeleton; probably by indirectly activating myosin. Also phosphorylates CFTR, EEF2K, KLC1, NOS3 and SLC12A1. Plays an important role in the differential regulation of pro-autophagy (composed of PIK3C3, BECN1, PIK3R4 and UVRAG or ATG14) and non-autophagy (composed of PIK3C3, BECN1 and PIK3R4) complexes, in response to glucose starvation. Can inhibit the non-autophagy complex by phosphorylating PIK3C3 and can activate the pro-autophagy complex by phosphorylating BECN1. Upon glucose starvation, promotes ARF6 activation in a kinase-independent manner leading to cell migration. Upon glucose deprivation mediates the phosphorylation of ACSS2 at 'Ser-659', which exposes the nuclear localization signal of ACSS2, required for its interaction with KPNA1 and nuclear translocation. Upon stress, regulates mitochondrial fragmentation through phosphorylation of MTFR1L. The polypeptide is 5'-AMP-activated protein kinase catalytic subunit alpha-2 (PRKAA2) (Sus scrofa (Pig)).